The following is a 360-amino-acid chain: Putative transport protein BU123 (360 aa).

Helical transmembrane passes span 18 to 38 (IFIV…ILGF), 39 to 59 (FWAS…QKIL), 66 to 86 (AVII…FFLV), 161 to 181 (GLFI…YWNG), 204 to 224 (LLLA…TALI), 230 to 250 (GIGL…IIFF), 251 to 271 (SCLI…WLYW), 280 to 300 (ILLI…PFFI), and 316 to 336 (IGGL…VLVI).

The protein belongs to the autoinducer-2 exporter (AI-2E) (TC 2.A.86) family.

Its subcellular location is the cell membrane. In Buchnera aphidicola subsp. Acyrthosiphon pisum (strain APS) (Acyrthosiphon pisum symbiotic bacterium), this protein is Putative transport protein BU123.